Here is a 308-residue protein sequence, read N- to C-terminus: N-acetylmuramic acid 6-phosphate etherase (308 aa).

In terms of domain architecture, SIS spans 63 to 226 (IVDAFACGGR…STASMIRSGK (164 aa)). The active-site Proton donor is the E91. Residue E122 is part of the active site.

Belongs to the GCKR-like family. MurNAc-6-P etherase subfamily. Homodimer.

It carries out the reaction N-acetyl-D-muramate 6-phosphate + H2O = N-acetyl-D-glucosamine 6-phosphate + (R)-lactate. Its pathway is amino-sugar metabolism; 1,6-anhydro-N-acetylmuramate degradation. It functions in the pathway amino-sugar metabolism; N-acetylmuramate degradation. The protein operates within cell wall biogenesis; peptidoglycan recycling. Its function is as follows. Specifically catalyzes the cleavage of the D-lactyl ether substituent of MurNAc 6-phosphate, producing GlcNAc 6-phosphate and D-lactate. Together with AnmK, is also required for the utilization of anhydro-N-acetylmuramic acid (anhMurNAc) either imported from the medium or derived from its own cell wall murein, and thus plays a role in cell wall recycling. The chain is N-acetylmuramic acid 6-phosphate etherase from Colwellia psychrerythraea (strain 34H / ATCC BAA-681) (Vibrio psychroerythus).